The sequence spans 439 residues: tRNA-2-methylthio-N(6)-dimethylallyladenosine synthase (439 aa).

One can recognise an MTTase N-terminal domain in the interval 2–119; that stretch reads KYIYIKTWGC…LAQMIDKVEK (118 aa). Residues cysteine 11, cysteine 48, cysteine 82, cysteine 156, cysteine 160, and cysteine 163 each coordinate [4Fe-4S] cluster. A Radical SAM core domain is found at 142-374; it reads KKTGYTASIS…QNCINKQTMS (233 aa). The TRAM domain occupies 377–439; sequence RKMLKSTQSV…HTHSLQGELI (63 aa).

It belongs to the methylthiotransferase family. MiaB subfamily. In terms of assembly, monomer. [4Fe-4S] cluster is required as a cofactor.

Its subcellular location is the cytoplasm. The enzyme catalyses N(6)-dimethylallyladenosine(37) in tRNA + (sulfur carrier)-SH + AH2 + 2 S-adenosyl-L-methionine = 2-methylsulfanyl-N(6)-dimethylallyladenosine(37) in tRNA + (sulfur carrier)-H + 5'-deoxyadenosine + L-methionine + A + S-adenosyl-L-homocysteine + 2 H(+). Its function is as follows. Catalyzes the methylthiolation of N6-(dimethylallyl)adenosine (i(6)A), leading to the formation of 2-methylthio-N6-(dimethylallyl)adenosine (ms(2)i(6)A) at position 37 in tRNAs that read codons beginning with uridine. This chain is tRNA-2-methylthio-N(6)-dimethylallyladenosine synthase, found in Buchnera aphidicola subsp. Schizaphis graminum (strain Sg).